We begin with the raw amino-acid sequence, 334 residues long: GTP 3',8-cyclase (334 aa).

The Radical SAM core domain occupies 11-236; it reads GFNRKIDYLR…ESTESSMGPA (226 aa). Arginine 20 serves as a coordination point for GTP. The [4Fe-4S] cluster site is built by cysteine 27 and cysteine 31. Tyrosine 33 contributes to the S-adenosyl-L-methionine binding site. Cysteine 34 contacts [4Fe-4S] cluster. Arginine 69 contributes to the GTP binding site. Glycine 73 serves as a coordination point for S-adenosyl-L-methionine. GTP is bound at residue threonine 100. Position 124 (serine 124) interacts with S-adenosyl-L-methionine. Position 161 (lysine 161) interacts with GTP. Methionine 195 is an S-adenosyl-L-methionine binding site. [4Fe-4S] cluster contacts are provided by cysteine 260 and cysteine 263. GTP is bound at residue 265-267; that stretch reads RVR. [4Fe-4S] cluster is bound at residue cysteine 277.

The protein belongs to the radical SAM superfamily. MoaA family. Monomer and homodimer. [4Fe-4S] cluster serves as cofactor.

It carries out the reaction GTP + AH2 + S-adenosyl-L-methionine = (8S)-3',8-cyclo-7,8-dihydroguanosine 5'-triphosphate + 5'-deoxyadenosine + L-methionine + A + H(+). It functions in the pathway cofactor biosynthesis; molybdopterin biosynthesis. Functionally, catalyzes the cyclization of GTP to (8S)-3',8-cyclo-7,8-dihydroguanosine 5'-triphosphate. The protein is GTP 3',8-cyclase of Pseudomonas putida (strain ATCC 47054 / DSM 6125 / CFBP 8728 / NCIMB 11950 / KT2440).